The chain runs to 331 residues: Activator of 90 kDa heat shock protein ATPase homolog 2 (331 aa).

It belongs to the AHA1 family.

In terms of biological role, co-chaperone that stimulates HSP90 ATPase activity. The sequence is that of Activator of 90 kDa heat shock protein ATPase homolog 2 (Ahsa2) from Mus musculus (Mouse).